Consider the following 225-residue polypeptide: UPF0758 protein XOO0462 (225 aa).

Residues 102–224 (ALSDPPSVGR…PVSLAERGWL (123 aa)) form the MPN domain. Zn(2+) contacts are provided by H173, H175, and D186. Residues 173–186 (HNHPSGNPEPSEAD) carry the JAMM motif motif.

The protein belongs to the UPF0758 family.

This chain is UPF0758 protein XOO0462, found in Xanthomonas oryzae pv. oryzae (strain MAFF 311018).